A 249-amino-acid polypeptide reads, in one-letter code: 6-phosphogluconolactonase 3 (249 aa).

Belongs to the glucosamine/galactosamine-6-phosphate isomerase family. 6-phosphogluconolactonase subfamily.

It is found in the cytoplasm. It localises to the nucleus. The enzyme catalyses 6-phospho-D-glucono-1,5-lactone + H2O = 6-phospho-D-gluconate + H(+). The protein operates within carbohydrate degradation; pentose phosphate pathway; D-ribulose 5-phosphate from D-glucose 6-phosphate (oxidative stage): step 2/3. Hydrolysis of 6-phosphogluconolactone to 6-phosphogluconate. The chain is 6-phosphogluconolactonase 3 (SOL3) from Saccharomyces cerevisiae (strain RM11-1a) (Baker's yeast).